The chain runs to 249 residues: Ubiquinone biosynthesis O-methyltransferase (249 aa).

S-adenosyl-L-methionine-binding residues include Arg-41, Gly-72, Asp-93, and Met-136.

This sequence belongs to the methyltransferase superfamily. UbiG/COQ3 family.

The enzyme catalyses a 3-demethylubiquinol + S-adenosyl-L-methionine = a ubiquinol + S-adenosyl-L-homocysteine + H(+). The catalysed reaction is a 3-(all-trans-polyprenyl)benzene-1,2-diol + S-adenosyl-L-methionine = a 2-methoxy-6-(all-trans-polyprenyl)phenol + S-adenosyl-L-homocysteine + H(+). It functions in the pathway cofactor biosynthesis; ubiquinone biosynthesis. Its function is as follows. O-methyltransferase that catalyzes the 2 O-methylation steps in the ubiquinone biosynthetic pathway. This is Ubiquinone biosynthesis O-methyltransferase from Methylobacterium sp. (strain 4-46).